A 1367-amino-acid chain; its full sequence is Dynactin, 150 kDa isoform (1367 aa).

The region spanning 28–70 (GETAFAPGTWVGIELDEPSGKNDGSVQGERYFNCEMGYGMFVR) is the CAP-Gly domain. The segment at 76 to 318 (VIAQPPPPPP…NLKATTITPR (243 aa)) is disordered. Low complexity-rich tracts occupy residues 88–99 (TFRRSVTTRPTS) and 132–149 (PSRTSSTSITRSPTRSPT). The segment covering 150-163 (KQLATASSSGNPSR) has biased composition (polar residues). Composition is skewed to low complexity over residues 164-190 (SGTPSTTTKPAGPTTRTRPSLSTSRHS) and 243-259 (STGSVSSVGKSGFKRGS). 3 coiled-coil regions span residues 321–598 (ITNT…MQEE), 637–698 (LQSD…EAEQ), and 1039–1199 (AELK…RARL).

It belongs to the dynactin 150 kDa subunit family. Large macromolecular complex of at least 10 components; p150(glued) binds directly to microtubules and to cytoplasmic dynein.

The protein localises to the cytoplasm. The protein resides in the cytoskeleton. Its function is as follows. Required for the cytoplasmic dynein-driven retrograde movement of vesicles and organelles along microtubules. Dynein-dynactin interaction is a key component of the mechanism of axonal transport of vesicles and organelles. In Neurospora crassa (strain ATCC 24698 / 74-OR23-1A / CBS 708.71 / DSM 1257 / FGSC 987), this protein is Dynactin, 150 kDa isoform (ro-3).